The primary structure comprises 283 residues: Acetylglutamate kinase (283 aa).

Substrate-binding positions include 64–65 (GG), arginine 86, and asparagine 181.

Belongs to the acetylglutamate kinase family. ArgB subfamily.

Its subcellular location is the cytoplasm. The enzyme catalyses N-acetyl-L-glutamate + ATP = N-acetyl-L-glutamyl 5-phosphate + ADP. The protein operates within amino-acid biosynthesis; L-arginine biosynthesis; N(2)-acetyl-L-ornithine from L-glutamate: step 2/4. In terms of biological role, catalyzes the ATP-dependent phosphorylation of N-acetyl-L-glutamate. This is Acetylglutamate kinase from Sulfurimonas denitrificans (strain ATCC 33889 / DSM 1251) (Thiomicrospira denitrificans (strain ATCC 33889 / DSM 1251)).